A 438-amino-acid chain; its full sequence is Coenzyme A disulfide reductase (438 aa).

8–33 (GAVAGGATCASQIRRLDKESDIIIFE) is an FAD binding site. Thr-15, Gln-19, Arg-22, Ser-39, and Asn-42 together coordinate substrate. The Nucleophile role is filled by Cys-43. The active-site Redox-active is the Cys-43. Lys-71 is a substrate binding site. 151-166 (VLVIGAGYVSLEVLEN) is an NADP(+) binding site. An FAD-binding site is contributed by 267–277 (TNVPNIYAIGD). Residue His-299 coordinates substrate. Tyr-419 is an FAD binding site. Lys-427 lines the substrate pocket.

It belongs to the class-III pyridine nucleotide-disulfide oxidoreductase family. Homodimer. It depends on FAD as a cofactor.

It carries out the reaction NADP(+) + 2 CoA = CoA-disulfide + NADPH + H(+). Functionally, catalyzes specifically the NADPH-dependent reduction of coenzyme A disulfide. The polypeptide is Coenzyme A disulfide reductase (Staphylococcus aureus (strain Mu3 / ATCC 700698)).